The sequence spans 431 residues: MSAKWEKKGANDGELTFEIDLDKISEGLDVAFKRVRKNINTPGFRKGKMPRQIFNKMYGEEALYEDALNAVLPEAYEAAVAEAGIDPVDQPQINVEKMEKGEAWVLTAQVTVKPEVKLGDYKGLEVPKQSRRITIKDVEQELETRRERQAELVLKEDAAAENGDTVVIDYAGSVDGVPFDGGQADNYSLELGSNSFIPGFEDQLVGHKAEEDVDVTVTFPKDYQAEELAGKEAIFKVKIHEVKGKELPELDDEFAKDIDEDVDSLDELKEKIREELKQQKNDAADAAIQDTAVAKATENATIPELPQAMIDEEINSQLQQYLGNMQQQGINPEMYYQITGTTEDDLKKQFAGDADKRVKTSLVLEAVVEAEKIEATDEEVAAELKSLAEQYNMEESAVRSVLSDDMLKHDIGVKKAIEVIADSAVEVKDAK.

The region spanning 163-248 (GDTVVIDYAG…IHEVKGKELP (86 aa)) is the PPIase FKBP-type domain.

The protein belongs to the FKBP-type PPIase family. Tig subfamily.

It is found in the cytoplasm. The enzyme catalyses [protein]-peptidylproline (omega=180) = [protein]-peptidylproline (omega=0). In terms of biological role, involved in protein export. Acts as a chaperone by maintaining the newly synthesized protein in an open conformation. Functions as a peptidyl-prolyl cis-trans isomerase. The chain is Trigger factor from Latilactobacillus sakei subsp. sakei (strain 23K) (Lactobacillus sakei subsp. sakei).